Consider the following 309-residue polypeptide: Ribonuclease Z (309 aa).

Zn(2+)-binding residues include H63, H65, D67, H68, H145, D216, and H274. Catalysis depends on D67, which acts as the Proton acceptor.

It belongs to the RNase Z family. In terms of assembly, homodimer. Zn(2+) is required as a cofactor.

The catalysed reaction is Endonucleolytic cleavage of RNA, removing extra 3' nucleotides from tRNA precursor, generating 3' termini of tRNAs. A 3'-hydroxy group is left at the tRNA terminus and a 5'-phosphoryl group is left at the trailer molecule.. Its function is as follows. Zinc phosphodiesterase, which displays some tRNA 3'-processing endonuclease activity. Probably involved in tRNA maturation, by removing a 3'-trailer from precursor tRNA. This is Ribonuclease Z from Streptococcus mutans serotype c (strain ATCC 700610 / UA159).